We begin with the raw amino-acid sequence, 216 residues long: Orotate phosphoribosyltransferase (216 aa).

Lys30 is a 5-phospho-alpha-D-ribose 1-diphosphate binding site. Residue 38–39 (FF) coordinates orotate. Residues 75–76 (YK), Arg102, Lys103, Lys106, His108, and 128–136 (DDVITAGTA) contribute to the 5-phospho-alpha-D-ribose 1-diphosphate site. Orotate is bound by residues Thr132 and Arg160.

The protein belongs to the purine/pyrimidine phosphoribosyltransferase family. PyrE subfamily. As to quaternary structure, homodimer. It depends on Mg(2+) as a cofactor.

It carries out the reaction orotidine 5'-phosphate + diphosphate = orotate + 5-phospho-alpha-D-ribose 1-diphosphate. It functions in the pathway pyrimidine metabolism; UMP biosynthesis via de novo pathway; UMP from orotate: step 1/2. In terms of biological role, catalyzes the transfer of a ribosyl phosphate group from 5-phosphoribose 1-diphosphate to orotate, leading to the formation of orotidine monophosphate (OMP). This Acinetobacter baylyi (strain ATCC 33305 / BD413 / ADP1) protein is Orotate phosphoribosyltransferase.